The primary structure comprises 176 residues: Isopentenyl-diphosphate Delta-isomerase (176 aa).

Mn(2+) is bound by residues histidine 24 and histidine 30. The 133-residue stretch at 28 to 160 (LLHRAFSIFV…PSAFTVWFHC (133 aa)) folds into the Nudix hydrolase domain. Cysteine 65 is an active-site residue. Histidine 67 serves as a coordination point for Mn(2+). Residue glutamate 85 coordinates Mg(2+). The Mn(2+) site is built by glutamate 110 and glutamate 112. Glutamate 112 is an active-site residue.

The protein belongs to the IPP isomerase type 1 family. It depends on Mg(2+) as a cofactor. Mn(2+) is required as a cofactor.

Its subcellular location is the cytoplasm. The enzyme catalyses isopentenyl diphosphate = dimethylallyl diphosphate. It participates in isoprenoid biosynthesis; dimethylallyl diphosphate biosynthesis; dimethylallyl diphosphate from isopentenyl diphosphate: step 1/1. Catalyzes the 1,3-allylic rearrangement of the homoallylic substrate isopentenyl (IPP) to its highly electrophilic allylic isomer, dimethylallyl diphosphate (DMAPP). This is Isopentenyl-diphosphate Delta-isomerase from Burkholderia multivorans (strain ATCC 17616 / 249).